Here is a 239-residue protein sequence, read N- to C-terminus: Enolase-phosphatase E1 (239 aa).

Positions 13 and 15 each coordinate Mg(2+). Substrate-binding positions include 133–134 and K170; that span reads SS. D196 is a Mg(2+) binding site.

It belongs to the HAD-like hydrolase superfamily. MasA/MtnC family. In terms of assembly, monomer. The cofactor is Mg(2+).

Its subcellular location is the cytoplasm. It localises to the nucleus. It catalyses the reaction 5-methylsulfanyl-2,3-dioxopentyl phosphate + H2O = 1,2-dihydroxy-5-(methylsulfanyl)pent-1-en-3-one + phosphate. The protein operates within amino-acid biosynthesis; L-methionine biosynthesis via salvage pathway; L-methionine from S-methyl-5-thio-alpha-D-ribose 1-phosphate: step 3/6. It participates in amino-acid biosynthesis; L-methionine biosynthesis via salvage pathway; L-methionine from S-methyl-5-thio-alpha-D-ribose 1-phosphate: step 4/6. Its function is as follows. Bifunctional enzyme that catalyzes the enolization of 2,3-diketo-5-methylthiopentyl-1-phosphate (DK-MTP-1-P) into the intermediate 2-hydroxy-3-keto-5-methylthiopentenyl-1-phosphate (HK-MTPenyl-1-P), which is then dephosphorylated to form the acireductone 1,2-dihydroxy-3-keto-5-methylthiopentene (DHK-MTPene). The protein is Enolase-phosphatase E1 of Chaetomium globosum (strain ATCC 6205 / CBS 148.51 / DSM 1962 / NBRC 6347 / NRRL 1970) (Soil fungus).